Consider the following 1111-residue polypeptide: MAPATEADNNFDTHEWKSEFASTRSGRNSPNIFAKVRRKLLLTPPVRNARSPRLTEEELDALTGDLPYATNYTYAYSKIYDPSLPDHWEVPNLGGTTSGSLSEQEHWSAASLSRQLLYILRFPVYLVLHVITYILEAFYHVIKITSFTIWDYLLYLVKLAKTRYYAYQDHRRRTALIRNRQEPFSTKAARSIRRFFEILVYVVLTPYRMLTRSNNGVEQYQYRSIKDQLENERASRMTTRSQTLERSRKFDGLSKSPARRAAPAFVKTSTITRITAKVFSSSPFGEGTSENITPTVVTTRTVKQRSVTPRFRQTRATREAITRALDTPELEIDTPLSTYGLRSRGLSHLNTPEPTFDIGHAAATSTPLFPQETYNYQYEEATGNKIKTAFTWLGYLILFPFFAARHVWYTFYDYGKSAYMKLTNYQQAPMETIHVRDINEPAPSSSDVHDAVGVSWRIRIADFLSSFVATIVEAHQVVFAMFKGGIVETVSYFGGLFAGLTDKKSSKFSWCQILGLLLALLFAIFLLGFLTSDNTAIRVKEITKDKNASKKSEGSLPAVPIWISAANHVKHYTWMVKEFVVDIAFDTYNYGKSTIGRLGTTPRYAWDLIASGCGAVGNGLKSVLSSSFRFIDFCAGKLFYYGSDGFLSANKSIGTFFNGCYETLYNGCTAIVGHTKSFIYNASNAVYNFFSTIFAGLLNFSTSSQNSILSLLKSFGTGITNIFYNFIYAPIAGVFNFAGDNYMYFFNEVAAVFGKVYNSVVSVLKTVINWILFLIAYPFSLCTRAWIRISQYAPEDVVQVIPIPQAITPTPDVERIVEEPLRKVTDVEDEELVIIPAPAPKPIPVPAPTPAPVIIHQTNVVETVDKDAIIKEVTEKLRAELSAQFQQELSAKFEQNYNTIIEQLKMENTNIQYDKNHLEAIIRQMIYEYDTDKTGKVDYALESSGGAVVSTRCSETYKSYTRLEKFWDIPIYYFHYSPRVVIQRNSKSLFPGECWCFKESRGYIAVELSHFIDVSSISYEHIGSEVAPEGNRSSAPKGVLVWAYKQIDDLNSRVLIGDYTYDLDGPPLQFFLAKHKPDFPVKFVELEVTSNYGAPFTCLYRLRVHGKVVQV.

The Nuclear portion of the chain corresponds to 1–509; the sequence is MAPATEADNN…LTDKKSSKFS (509 aa). Required for nuclear envelope localization stretches follow at residues 118–244 and 503–507; these read YILR…SQTL and KKSSK. The interval 232–253 is disordered; the sequence is ERASRMTTRSQTLERSRKFDGL. The span at 243–252 shows a compositional bias: basic and acidic residues; it reads TLERSRKFDG. The helical transmembrane segment at 510 to 530 threads the bilayer; that stretch reads WCQILGLLLALLFAIFLLGFL. Topologically, residues 531–1111 are perinuclear space; that stretch reads TSDNTAIRVK…LRVHGKVVQV (581 aa). The segment at 912–1111 is interaction with zyg-12; sequence QYDKNHLEAI…LRVHGKVVQV (200 aa). Residues 945–1109 enclose the SUN domain; sequence GGAVVSTRCS…YRLRVHGKVV (165 aa).

Component of the unc-83-unc-84 LINC complex which contains at least unc-83 and unc-84. Within the unc-83-unc-84 LINC complex interacts (via C-terminus) with unc-83; the interaction is probably required to recruit unc-83 to the nuclear membrane. Most likely interacts with anc-1; the interaction is probably required to recruit anc-1 to the nuclear envelope. Interacts (via C-terminus) with zyg-12 (via C-terminus); the interaction is direct. May interact with lmn-1; this interaction may be required to complete the connection between the nuclear lamina and the cytoskeleton. As to expression, expressed in all somatic cells. Not expressed in germ cells in the mitotic and transition zones of the gonad. One study shows expression at the beginning of the late pachytene stage in the proximal gonad, but there is no expression in the male germline, suggesting expression is specific to oogenesis in hermaphrodites.

It is found in the nucleus inner membrane. Its subcellular location is the cytoplasm. The protein localises to the cytoskeleton. Involved in nuclear migration and anchoring in hypodermal precursor cells. Most likely recruits anc-1 to the nuclear envelope where anc-1 functions to tether the nucleus to the actin cytoskeleton. Component of the unc-83-unc-84 LINC (LInker of Nucleoskeleton and Cytoskeleton) complex where it recruits and interacts with unc-83 to form a bridge connecting the nuclear envelope to the cytoskeleton which allows for nuclear transport along microtubules. Its role in nuclear migration may be in association with lamin, lmn-1. Regulates nuclear migrations in one-cell embryos, controlling the posterior migration of the male pronucleus following fertilization. Not required for centrosome attachment to the nucleus. Plays a role in the maintenance of the nuclear envelope architecture in body wall muscle cells. May be involved in DNA damage repair through an association with zyg-12. Potentially has roles in homologous recombination, double strand break repair and meiotic recombination. Specifically, may in part inhibit non-homologous end joining repair, most likely through recruiting fan-1 to the nucleoplasm, to facilitate the repair of DNA cross-links. The protein is Nuclear migration and anchoring protein unc-84 of Caenorhabditis elegans.